A 436-amino-acid polypeptide reads, in one-letter code: 3-ketoacyl-CoA thiolase (436 aa).

Cys-99 acts as the Acyl-thioester intermediate in catalysis. Active-site proton acceptor residues include His-392 and Cys-422.

This sequence belongs to the thiolase-like superfamily. Thiolase family. In terms of assembly, heterotetramer of two alpha chains (FadJ) and two beta chains (FadI).

It localises to the cytoplasm. It carries out the reaction an acyl-CoA + acetyl-CoA = a 3-oxoacyl-CoA + CoA. It participates in lipid metabolism; fatty acid beta-oxidation. Its function is as follows. Catalyzes the final step of fatty acid oxidation in which acetyl-CoA is released and the CoA ester of a fatty acid two carbons shorter is formed. This Salmonella typhimurium (strain LT2 / SGSC1412 / ATCC 700720) protein is 3-ketoacyl-CoA thiolase.